The sequence spans 287 residues: Bifunctional protein FolD (287 aa).

NADP(+)-binding positions include 165-167 (GRS), Ser-190, and Ile-231.

It belongs to the tetrahydrofolate dehydrogenase/cyclohydrolase family. Homodimer.

The catalysed reaction is (6R)-5,10-methylene-5,6,7,8-tetrahydrofolate + NADP(+) = (6R)-5,10-methenyltetrahydrofolate + NADPH. It catalyses the reaction (6R)-5,10-methenyltetrahydrofolate + H2O = (6R)-10-formyltetrahydrofolate + H(+). The protein operates within one-carbon metabolism; tetrahydrofolate interconversion. Its function is as follows. Catalyzes the oxidation of 5,10-methylenetetrahydrofolate to 5,10-methenyltetrahydrofolate and then the hydrolysis of 5,10-methenyltetrahydrofolate to 10-formyltetrahydrofolate. This Trichodesmium erythraeum (strain IMS101) protein is Bifunctional protein FolD.